The chain runs to 158 residues: UPF0225 protein Pfl01_1218 (158 aa).

It belongs to the UPF0225 family.

This Pseudomonas fluorescens (strain Pf0-1) protein is UPF0225 protein Pfl01_1218.